Consider the following 95-residue polypeptide: Aspartyl/glutamyl-tRNA(Asn/Gln) amidotransferase subunit C (95 aa).

The protein belongs to the GatC family. Heterotrimer of A, B and C subunits.

It catalyses the reaction L-glutamyl-tRNA(Gln) + L-glutamine + ATP + H2O = L-glutaminyl-tRNA(Gln) + L-glutamate + ADP + phosphate + H(+). It carries out the reaction L-aspartyl-tRNA(Asn) + L-glutamine + ATP + H2O = L-asparaginyl-tRNA(Asn) + L-glutamate + ADP + phosphate + 2 H(+). Allows the formation of correctly charged Asn-tRNA(Asn) or Gln-tRNA(Gln) through the transamidation of misacylated Asp-tRNA(Asn) or Glu-tRNA(Gln) in organisms which lack either or both of asparaginyl-tRNA or glutaminyl-tRNA synthetases. The reaction takes place in the presence of glutamine and ATP through an activated phospho-Asp-tRNA(Asn) or phospho-Glu-tRNA(Gln). The protein is Aspartyl/glutamyl-tRNA(Asn/Gln) amidotransferase subunit C of Rhizobium leguminosarum bv. trifolii (strain WSM2304).